We begin with the raw amino-acid sequence, 1097 residues long: MMDIYVCLKRPSWMVDNKRMRTASNFQWLLSTFILLYLMNQVNSQKKGAPHDLKCVTNNLQVWNCSWKAPSGTGRGTDYEVCIENRSRSCYQLEKTSIKIPALSHGDYEITINSLHDFGSSTSKFTLNEQNVSLIPDTPEILNLSADFSTSTLYLKWNDRGSVFPHRSNVIWEIKVLRKESMELVKLVTHNTTLNGKDTLHHWSWASDMPLECAIHFVEIRCYIDNLHFSGLEEWSDWSPVKNISWIPDSQTKVFPQDKVILVGSDITFCCVSQEKVLSALIGHTNCPLIHLDGENVAIKIRNISVSASSGTNVVFTTEDNIFGTVIFAGYPPDTPQQLNCETHDLKEIICSWNPGRVTALVGPRATSYTLVESFSGKYVRLKRAEAPTNESYQLLFQMLPNQEIYNFTLNAHNPLGRSQSTILVNITEKVYPHTPTSFKVKDINSTAVKLSWHLPGNFAKINFLCEIEIKKSNSVQEQRNVTIKGVENSSYLVALDKLNPYTLYTFRIRCSTETFWKWSKWSNKKQHLTTEASPSKGPDTWREWSSDGKNLIIYWKPLPINEANGKILSYNVSCSSDEETQSLSEIPDPQHKAEIRLDKNDYIISVVAKNSVGSSPPSKIASMEIPNDDLKIEQVVGMGKGILLTWHYDPNMTCDYVIKWCNSSRSEPCLMDWRKVPSNSTETVIESDEFRPGIRYNFFLYGCRNQGYQLLRSMIGYIEELAPIVAPNFTVEDTSADSILVKWEDIPVEELRGFLRGYLFYFGKGERDTSKMRVLESGRSDIKVKNITDISQKTLRIADLQGKTSYHLVLRAYTDGGVGPEKSMYVVTKENSVGLIIAILIPVAVAVIVGVVTSILCYRKREWIKETFYPDIPNPENCKALQFQKSVCEGSSALKTLEMNPCTPNNVEVLETRSAFPKIEDTEIISPVAERPEDRSDAEPENHVVVSYCPPIIEEEIPNPAADEAGGTAQVIYIDVQSMYQPQAKPEEEQENDPVGGAGYKPQMHLPINSTVEDIAAEEDLDKTAGYRPQANVNTWNLVSPDSPRSIDSNSEIVSFGSPCSINSRQFLIPPKDEDSPKSNGGGWSFTNFFQNKPND.

Residues 1-44 form the signal peptide; the sequence is MMDIYVCLKRPSWMVDNKRMRTASNFQWLLSTFILLYLMNQVNS. Residues 45–833 are Extracellular-facing; sequence QKKGAPHDLK…SMYVVTKENS (789 aa). In terms of domain architecture, Fibronectin type-III 1 spans 49–138; it reads APHDLKCVTN…EQNVSLIPDT (90 aa). 2 cysteine pairs are disulfide-bonded: cysteine 55-cysteine 65 and cysteine 82-cysteine 90. 7 N-linked (GlcNAc...) asparagine glycosylation sites follow: asparagine 64, asparagine 85, asparagine 131, asparagine 143, asparagine 191, asparagine 243, and asparagine 303. Cysteine 213 and cysteine 270 form a disulfide bridge. 5 Fibronectin type-III domains span residues 335–434, 435–534, 538–629, 627–719, and 724–833; these read TPQQ…VYPH, TPTS…TEAS, GPDT…IPND, PNDD…IGYI, and PIVA…KENS. Cysteine 341 and cysteine 351 are disulfide-bonded. 6 N-linked (GlcNAc...) asparagine glycosylation sites follow: asparagine 390, asparagine 407, asparagine 426, asparagine 445, asparagine 481, and asparagine 489. A disulfide bridge links cysteine 466 with cysteine 511. The WSXWS motif motif lies at 519-523; the sequence is WSKWS. 6 N-linked (GlcNAc...) asparagine glycosylation sites follow: asparagine 572, asparagine 652, asparagine 663, asparagine 680, asparagine 729, and asparagine 787. Residues 834–858 traverse the membrane as a helical segment; sequence VGLIIAILIPVAVAVIVGVVTSILC. At 859-1097 the chain is on the cytoplasmic side; sequence YRKREWIKET…TNFFQNKPND (239 aa). The Box 1 motif signature appears at 869-877; sequence FYPDIPNPE. Residue serine 927 is modified to Phosphoserine. Residues 983–1005 are disordered; that stretch reads PQAKPEEEQENDPVGGAGYKPQM. Serine 1044 is modified (phosphoserine). The tract at residues 1066 to 1097 is disordered; the sequence is RQFLIPPKDEDSPKSNGGGWSFTNFFQNKPND. Residues 1086–1097 show a composition bias toward polar residues; it reads SFTNFFQNKPND.

Belongs to the type I cytokine receptor family. Type 2 subfamily. In terms of assembly, heterodimer composed of LIFR and IL6ST. The heterodimer formed by LIFR and IL6ST interacts with the complex formed by CNTF and CNTFR.

The protein localises to the cell membrane. The protein resides in the secreted. In terms of biological role, signal-transducing molecule. May have a common pathway with IL6ST. The soluble form inhibits the biological activity of LIF by blocking its binding to receptors on target cells. The polypeptide is Leukemia inhibitory factor receptor (LIFR) (Homo sapiens (Human)).